We begin with the raw amino-acid sequence, 84 residues long: Large ribosomal subunit protein bL27 (84 aa).

Positions 1-21 are disordered; that stretch reads MAHKKGASSTRNGRDSNAQRL. A compositionally biased stretch (polar residues) spans 7 to 19; it reads ASSTRNGRDSNAQ.

The protein belongs to the bacterial ribosomal protein bL27 family.

In Clavibacter sepedonicus (Clavibacter michiganensis subsp. sepedonicus), this protein is Large ribosomal subunit protein bL27.